A 201-amino-acid polypeptide reads, in one-letter code: ATP-dependent Clp protease proteolytic subunit (201 aa).

S100 acts as the Nucleophile in catalysis. The active site involves H125.

It belongs to the peptidase S14 family. As to quaternary structure, component of the chloroplastic Clp protease core complex.

Its subcellular location is the plastid. The protein localises to the chloroplast stroma. It carries out the reaction Hydrolysis of proteins to small peptides in the presence of ATP and magnesium. alpha-casein is the usual test substrate. In the absence of ATP, only oligopeptides shorter than five residues are hydrolyzed (such as succinyl-Leu-Tyr-|-NHMec, and Leu-Tyr-Leu-|-Tyr-Trp, in which cleavage of the -Tyr-|-Leu- and -Tyr-|-Trp bonds also occurs).. Cleaves peptides in various proteins in a process that requires ATP hydrolysis. Has a chymotrypsin-like activity. Plays a major role in the degradation of misfolded proteins. The protein is ATP-dependent Clp protease proteolytic subunit of Chloranthus spicatus (Chulantree).